Consider the following 348-residue polypeptide: Dihydroorotate dehydrogenase (quinone) (348 aa).

FMN-binding positions include Ala-60–Lys-64 and Thr-84. Residue Lys-64 coordinates substrate. Asn-109 to Phe-113 provides a ligand contact to substrate. Residues Asn-138 and Asn-169 each contribute to the FMN site. Asn-169 provides a ligand contact to substrate. Residue Ser-172 is the Nucleophile of the active site. Asn-174 provides a ligand contact to substrate. FMN is bound by residues Lys-207 and Ser-235. Asn-236–Thr-237 is a binding site for substrate. Residues Gly-258, Gly-287, and Tyr-308–Ser-309 each bind FMN.

The protein belongs to the dihydroorotate dehydrogenase family. Type 2 subfamily. In terms of assembly, monomer. The cofactor is FMN.

The protein localises to the cell membrane. It catalyses the reaction (S)-dihydroorotate + a quinone = orotate + a quinol. It functions in the pathway pyrimidine metabolism; UMP biosynthesis via de novo pathway; orotate from (S)-dihydroorotate (quinone route): step 1/1. In terms of biological role, catalyzes the conversion of dihydroorotate to orotate with quinone as electron acceptor. This chain is Dihydroorotate dehydrogenase (quinone), found in Parvibaculum lavamentivorans (strain DS-1 / DSM 13023 / NCIMB 13966).